Here is a 237-residue protein sequence, read N- to C-terminus: Demethylmenaquinone methyltransferase (237 aa).

S-adenosyl-L-methionine contacts are provided by residues Thr-58, Asp-79, and 106 to 107 (NA).

This sequence belongs to the class I-like SAM-binding methyltransferase superfamily. MenG/UbiE family.

It catalyses the reaction a 2-demethylmenaquinol + S-adenosyl-L-methionine = a menaquinol + S-adenosyl-L-homocysteine + H(+). It participates in quinol/quinone metabolism; menaquinone biosynthesis; menaquinol from 1,4-dihydroxy-2-naphthoate: step 2/2. In terms of biological role, methyltransferase required for the conversion of demethylmenaquinol (DMKH2) to menaquinol (MKH2). This is Demethylmenaquinone methyltransferase from Anoxybacillus flavithermus (strain DSM 21510 / WK1).